The following is a 333-amino-acid chain: D-fructose 1,6-bisphosphatase class 2/sedoheptulose 1,7-bisphosphatase (333 aa).

Mn(2+) is bound by residues D33, E57, D85, and E88. Residues 88-90, Y119, 164-166, and 186-188 each bind substrate; these read EGT, RTR, and DGD. A Mn(2+)-binding site is contributed by E213.

The protein belongs to the FBPase class 2 family. In terms of assembly, homotetramer. Requires Mn(2+) as cofactor.

It carries out the reaction beta-D-fructose 1,6-bisphosphate + H2O = beta-D-fructose 6-phosphate + phosphate. It catalyses the reaction D-sedoheptulose 1,7-bisphosphate + H2O = D-sedoheptulose 7-phosphate + phosphate. The protein operates within carbohydrate biosynthesis; Calvin cycle. Its function is as follows. Catalyzes the hydrolysis of fructose 1,6-bisphosphate (Fru 1,6-P2) and sedoheptulose 1,7-bisphosphate (Sed 1,7-P2) to fructose 6-phosphate and sedoheptulose 7-phosphate, respectively. The sequence is that of D-fructose 1,6-bisphosphatase class 2/sedoheptulose 1,7-bisphosphatase from Prochlorococcus marinus (strain AS9601).